The chain runs to 522 residues: Putative E3 ubiquitin-protein ligase RING1a (522 aa).

Positions 1 to 10 (MSVKNNSFSS) are enriched in polar residues. Residues 1-119 (MSVKNNSFSS…RSPSSISGDQ (119 aa)) form a disordered region. Residues 32–64 (LQEKDETKEEKEGDEEVKHDEAEEDQEVVKPND) are compositionally biased toward basic and acidic residues. Residues 65–106 (AEEDDDGDDAEEDEEEEVEAEEDEEAEEEEEEEEEEEEEEED) are compositionally biased toward acidic residues. The RING-type zinc finger occupies 136-176 (CPICLGIIKKTRTVMECLHRFCRECIDKSMRLGNNECPACR). Disordered stretches follow at residues 250-347 (VLMR…DTKG) and 363-385 (RGGT…KSVR). Positions 287-306 (NNNRGRDKDSSSDERGTEVR) are enriched in basic and acidic residues. Over residues 316–325 (SRSTQHPSSS) the composition is skewed to low complexity. Composition is skewed to polar residues over residues 326–336 (GANKNNGNCAD) and 366–384 (TRSN…SKSV).

In terms of assembly, homodimer or heterodimer with RING1B. Interacts with CLF. Component of the PRC1-like complex, at least composed of RING1A, RING1B and LHP1.

It is found in the nucleus. It carries out the reaction S-ubiquitinyl-[E2 ubiquitin-conjugating enzyme]-L-cysteine + [acceptor protein]-L-lysine = [E2 ubiquitin-conjugating enzyme]-L-cysteine + N(6)-ubiquitinyl-[acceptor protein]-L-lysine.. The protein operates within protein modification; protein ubiquitination. Its function is as follows. Putative E3 ubiquitin-protein ligase that mediates monoubiquitination of 'Lys-119' of histone H2A (H2AK119ub), thereby playing a central role in histone code and gene regulation. As part of the PRC1-like complex, repress class I KNOX gene expression. PcG PRC1 complex maintains the transcriptionally repressive state of many genes, including Hox genes, throughout development. PcG PRC1 complex acts via chromatin remodeling and modification of histones, rendering chromatin heritably changed in its expressibility. In Arabidopsis thaliana (Mouse-ear cress), this protein is Putative E3 ubiquitin-protein ligase RING1a (RING1A).